The primary structure comprises 202 residues: Small ribosomal subunit protein uS5 (202 aa).

The segment covering 1-13 (MPGQQRRGGGSGG) has biased composition (gly residues). A disordered region spans residues 1 to 31 (MPGQQRRGGGSGGSDRRERRDRSGGGPAQEK). The span at 14–23 (SDRRERRDRS) shows a compositional bias: basic and acidic residues. The S5 DRBM domain occupies 34–97 (YVERVVAINR…EEAKKHFFKV (64 aa)).

The protein belongs to the universal ribosomal protein uS5 family. As to quaternary structure, part of the 30S ribosomal subunit. Contacts proteins S4 and S8.

Functionally, with S4 and S12 plays an important role in translational accuracy. Its function is as follows. Located at the back of the 30S subunit body where it stabilizes the conformation of the head with respect to the body. This is Small ribosomal subunit protein uS5 from Parafrankia sp. (strain EAN1pec).